We begin with the raw amino-acid sequence, 488 residues long: DNA polymerase II small subunit (488 aa).

It belongs to the DNA polymerase delta/II small subunit family. Heterodimer of a large subunit and a small subunit.

The enzyme catalyses DNA(n) + a 2'-deoxyribonucleoside 5'-triphosphate = DNA(n+1) + diphosphate. It catalyses the reaction Exonucleolytic cleavage in the 3'- to 5'-direction to yield nucleoside 5'-phosphates.. In terms of biological role, possesses two activities: a DNA synthesis (polymerase) and an exonucleolytic activity that degrades single-stranded DNA in the 3' to 5' direction. Has a template-primer preference which is characteristic of a replicative DNA polymerase. This is DNA polymerase II small subunit (polB) from Thermoplasma acidophilum (strain ATCC 25905 / DSM 1728 / JCM 9062 / NBRC 15155 / AMRC-C165).